We begin with the raw amino-acid sequence, 234 residues long: Orotidine 5'-phosphate decarboxylase (234 aa).

Residues aspartate 10, lysine 31, 58–67 (DLKLHDIPNT), threonine 121, arginine 183, glutamine 192, glycine 212, and arginine 213 each bind substrate. Lysine 60 serves as the catalytic Proton donor.

It belongs to the OMP decarboxylase family. Type 1 subfamily. In terms of assembly, homodimer.

It catalyses the reaction orotidine 5'-phosphate + H(+) = UMP + CO2. Its pathway is pyrimidine metabolism; UMP biosynthesis via de novo pathway; UMP from orotate: step 2/2. In terms of biological role, catalyzes the decarboxylation of orotidine 5'-monophosphate (OMP) to uridine 5'-monophosphate (UMP). The polypeptide is Orotidine 5'-phosphate decarboxylase (Halalkalibacterium halodurans (strain ATCC BAA-125 / DSM 18197 / FERM 7344 / JCM 9153 / C-125) (Bacillus halodurans)).